A 131-amino-acid chain; its full sequence is Profilin-1 (131 aa).

Belongs to the profilin family. As to quaternary structure, occurs in many kinds of cells as a complex with monomeric actin in a 1:1 ratio.

The protein localises to the cytoplasm. It localises to the cytoskeleton. In terms of biological role, binds to actin and affects the structure of the cytoskeleton. At high concentrations, profilin prevents the polymerization of actin, whereas it enhances it at low concentrations. By binding to PIP2, it inhibits the formation of IP3 and DG. This chain is Profilin-1, found in Malus domestica (Apple).